A 186-amino-acid chain; its full sequence is Ribosome-recycling factor (186 aa).

This sequence belongs to the RRF family.

Its subcellular location is the cytoplasm. In terms of biological role, responsible for the release of ribosomes from messenger RNA at the termination of protein biosynthesis. May increase the efficiency of translation by recycling ribosomes from one round of translation to another. The sequence is that of Ribosome-recycling factor from Chlorobium limicola (strain DSM 245 / NBRC 103803 / 6330).